Reading from the N-terminus, the 434-residue chain is Pyrichalasin H cluster regulator BC2 (434 aa).

Disordered regions lie at residues 297-321 and 362-383; these read GSSPSGTPESELTSPHKRATTCSPL and HPGHEDHQQQQEEVKQHDRLSH. Positions 298–309 are enriched in polar residues; sequence SSPSGTPESELT. Over residues 362-380 the composition is skewed to basic and acidic residues; that stretch reads HPGHEDHQQQQEEVKQHDR.

The protein localises to the nucleus. Functionally, transcription factor probably involved in regulation of gene cluster that mediates the biosynthesis of a tyrosine-derived cytochalasan acting as a fungal signal recognized by resistant rice plants and leads to avirulence in Pi33 resistant rice cultivars. The chain is Pyrichalasin H cluster regulator BC2 from Pyricularia oryzae (strain 70-15 / ATCC MYA-4617 / FGSC 8958) (Rice blast fungus).